A 348-amino-acid chain; its full sequence is Tripartite motif-containing protein 16-like protein (348 aa).

In terms of domain architecture, B30.2/SPRY spans Tyr139–Glu337.

This sequence belongs to the TRIM/RBCC family.

It localises to the cytoplasm. The sequence is that of Tripartite motif-containing protein 16-like protein (TRIM16L) from Homo sapiens (Human).